The following is a 466-amino-acid chain: 3-isopropylmalate dehydratase large subunit (466 aa).

[4Fe-4S] cluster-binding residues include cysteine 347, cysteine 407, and cysteine 410.

The protein belongs to the aconitase/IPM isomerase family. LeuC type 1 subfamily. In terms of assembly, heterodimer of LeuC and LeuD. Requires [4Fe-4S] cluster as cofactor.

It catalyses the reaction (2R,3S)-3-isopropylmalate = (2S)-2-isopropylmalate. It participates in amino-acid biosynthesis; L-leucine biosynthesis; L-leucine from 3-methyl-2-oxobutanoate: step 2/4. In terms of biological role, catalyzes the isomerization between 2-isopropylmalate and 3-isopropylmalate, via the formation of 2-isopropylmaleate. The chain is 3-isopropylmalate dehydratase large subunit from Escherichia coli O9:H4 (strain HS).